The chain runs to 151 residues: Ubiquitin-conjugating enzyme E2 W (151 aa).

Met1 participates in a covalent cross-link: Peptide (Met-Gly) (interchain with G-Cter in ubiquitin). Residues 3–151 (SMQKRLQKEL…TKWWYHDDTC (149 aa)) form the UBC core domain. Residue Cys91 is the Glycyl thioester intermediate of the active site.

The protein belongs to the ubiquitin-conjugating enzyme family. As to quaternary structure, homodimer. Interacts with FANCL. Interacts with STUB1/CHIP. Post-translationally, ubiquitinated in vitro in the presence of FANCL. Autoubiquitinated at Met-1.

The protein localises to the nucleus. It catalyses the reaction S-ubiquitinyl-[E1 ubiquitin-activating enzyme]-L-cysteine + [E2 ubiquitin-conjugating enzyme]-L-cysteine = [E1 ubiquitin-activating enzyme]-L-cysteine + S-ubiquitinyl-[E2 ubiquitin-conjugating enzyme]-L-cysteine.. It carries out the reaction S-ubiquitinyl-[E1 ubiquitin-activating enzyme]-L-cysteine + [acceptor protein]-N-terminal-amino acid = [E1 ubiquitin-activating enzyme]-L-cysteine + N-terminal-ubiquitinyl-[acceptor protein].. The protein operates within protein modification; protein ubiquitination. Its function is as follows. Accepts ubiquitin from the E1 complex and catalyzes its covalent attachment to other proteins. Specifically monoubiquitinates the N-terminus of various substrates, including ATXN3, MAPT/TAU, POLR2H/RPB8 and STUB1/CHIP, by recognizing backbone atoms of disordered N-termini. Involved in degradation of misfolded chaperone substrates by mediating monoubiquitination of STUB1/CHIP, leading to recruitment of ATXN3 to monoubiquitinated STUB1/CHIP, and restriction of the length of ubiquitin chain attached to STUB1/CHIP substrates by ATXN3. After UV irradiation, but not after mitomycin-C (MMC) treatment, acts as a specific E2 ubiquitin-conjugating enzyme for the Fanconi anemia complex by associating with E3 ubiquitin-protein ligase FANCL and catalyzing monoubiquitination of FANCD2, a key step in the DNA damage pathway. In vitro catalyzes 'Lys-11'-linked polyubiquitination. UBE2W-catalyzed ubiquitination also occurs in the presence of inactive RING/U-box type E3s, i.e. lacking the active site cysteine residues to form thioester bonds with ubiquitin, or even in the absence of E3, albeit at a slower rate. This chain is Ubiquitin-conjugating enzyme E2 W (UBE2W), found in Bos taurus (Bovine).